Reading from the N-terminus, the 504-residue chain is uncharacterized protein (504 aa).

A helical membrane pass occupies residues 26–46; the sequence is ILFLLLGLIILVNISINVTTV. Polar residues predominate over residues 103–112; sequence PTQCSSSSTH. Disordered stretches follow at residues 103–180, 313–402, and 431–504; these read PTQC…TRPM, YDAR…PLTT, and QRLA…GKLN. Positions 113 to 128 are enriched in basic residues; it reads YFRKHSNDRRSRRRYC. Positions 135-147 are enriched in polar residues; the sequence is QIRQSNQQQSCHS. Residues 313–324 show a composition bias toward basic and acidic residues; the sequence is YDARDQWRRGTE. Over residues 349-377 the composition is skewed to polar residues; that stretch reads SSQAHRQNFPSYTHSQPNHSPPQSVGYSS. Composition is skewed to basic and acidic residues over residues 378–389 and 467–478; these read RESHEVRRRAPD and LELKRQVQENRG. Basic residues predominate over residues 494–504; the sequence is SLHRSRTGKLN.

The protein resides in the membrane. This is an uncharacterized protein from Rattus norvegicus (Rat).